Reading from the N-terminus, the 1219-residue chain is Protein jagged-1 (1219 aa).

Positions 1-33 (MRSPRTRGRPGRPLSLLLALLCALRAKVCGASG) are cleaved as a signal peptide. Over 34–1067 (QFELEILSMQ…QRRPLKNRTD (1034 aa)) the chain is Extracellular. Asn-143 is a glycosylation site (N-linked (GlcNAc...) asparagine). A DSL domain is found at 185 to 229 (VTCDDHYYGFGCNKFCRPRDDFFGHYACDQNGNKTCMEGWMGPEC). Disulfide bonds link Cys-187–Cys-196 and Cys-200–Cys-212. An important for interaction with NOTCH1 region spans residues 199–207 (FCRPRDDFF). Asn-217 is a glycosylation site (N-linked (GlcNAc...) asparagine). Cystine bridges form between Cys-220-Cys-229, Cys-234-Cys-245, Cys-238-Cys-251, Cys-253-Cys-262, Cys-265-Cys-276, Cys-271-Cys-282, Cys-284-Cys-293, Cys-300-Cys-312, Cys-306-Cys-322, Cys-324-Cys-333, Cys-340-Cys-351, Cys-345-Cys-360, Cys-362-Cys-371, Cys-378-Cys-389, Cys-383-Cys-398, Cys-400-Cys-409, Cys-416-Cys-427, Cys-421-Cys-436, Cys-438-Cys-447, Cys-454-Cys-464, Cys-458-Cys-473, Cys-475-Cys-484, Cys-491-Cys-502, Cys-496-Cys-511, Cys-513-Cys-522, Cys-529-Cys-540, Cys-534-Cys-549, Cys-551-Cys-560, Cys-578-Cys-605, Cys-599-Cys-615, Cys-617-Cys-626, Cys-633-Cys-644, Cys-638-Cys-653, Cys-655-Cys-664, Cys-671-Cys-682, Cys-676-Cys-691, Cys-693-Cys-702, Cys-709-Cys-720, Cys-714-Cys-729, and Cys-731-Cys-740. The EGF-like 1 domain occupies 230 to 263 (NKAICRQGCSPKHGSCKLPGDCRCQYGWQGLYCD). An EGF-like 2; atypical domain is found at 264-294 (KCIPHPGCVHGTCNEPWQCLCETNWGGQLCD). 2 EGF-like domains span residues 296-334 (DLNY…PNCE) and 336-372 (AEHA…PTCS). Residues 374–410 (NIDDCSPNNCSHGGTCQDLVNGFKCVCPPQWTGKTCQ) form the EGF-like 5; calcium-binding domain. An N-linked (GlcNAc...) asparagine glycan is attached at Asn-382. Positions 412–448 (DANECEAKPCVNARSCKNLIASYYCDCLPGWMGQNCD) constitute an EGF-like 6; calcium-binding domain. The 36-residue stretch at 450–485 (NINDCLGQCQNDASCRDLVNGYRCICPPGYAGDHCE) folds into the EGF-like 7; calcium-binding domain. An EGF-like 8; calcium-binding domain is found at 487-523 (DIDECASNPCLNGGHCQNEINRFQCLCPTGFSGNLCQ). 2 consecutive EGF-like domains span residues 525–561 (DIDY…KNCS) and 586–627 (DTPE…TYCH). An N-linked (GlcNAc...) asparagine glycan is attached at Asn-559. One can recognise an EGF-like 11; calcium-binding domain in the interval 629 to 665 (NINDCEGNPCTNGGTCIDGVNSYKCICSDGWEGAHCE). The 37-residue stretch at 667-703 (NINDCSQNPCHYGGTCRDLVNDFYCDCKNGWKGKTCH) folds into the EGF-like 12; calcium-binding domain. EGF-like domains are found at residues 705 to 741 (RDSQ…TTCN) and 744 to 780 (RNSS…PICT). N-linked (GlcNAc...) asparagine glycosylation is present at Asn-745. Cystine bridges form between Cys-748–Cys-759, Cys-753–Cys-768, Cys-770–Cys-779, Cys-786–Cys-797, Cys-791–Cys-806, Cys-808–Cys-817, Cys-824–Cys-835, Cys-829–Cys-844, Cys-846–Cys-855, Cys-925–Cys-936, and Cys-948–Cys-958. One can recognise an EGF-like 15; calcium-binding domain in the interval 782-818 (NTNDCSPHPCYNSGTCVDGDNWYRCECAPGFAGPDCR). The region spanning 820 to 856 (NINECQSSPCAFGATCVDEINGYQCICPPGHSGAKCH) is the EGF-like 16; calcium-binding domain. 4 N-linked (GlcNAc...) asparagine glycosylation sites follow: Asn-960, Asn-991, Asn-1045, and Asn-1064. The chain crosses the membrane as a helical span at residues 1068–1093 (FLVPLLSSVLTVAWVCCLVTAFYWCV). The Cytoplasmic segment spans residues 1094-1219 (RKRRRKPSSH…QSLNRMEYIV (126 aa)). Positions 1182–1219 (REEKVPQRTPTKHPNWTNKQDNRDLESAQSLNRMEYIV) are disordered. The span at 1189–1200 (RTPTKHPNWTNK) shows a compositional bias: polar residues.

In terms of assembly, interacts with NOTCH1. Interacts with NOTCH2 and NOTCH3. Widely expressed in a variety of tissues.

The protein resides in the membrane. It is found in the cell membrane. Ligand for multiple Notch receptors and involved in the mediation of Notch signaling. May be involved in cell-fate decisions during hematopoiesis. Enhances fibroblast growth factor-induced angiogenesis (in vitro). Seems to be involved in early and late stages of mammalian cardiovascular development. Inhibits myoblast differentiation. May regulate fibroblast growth factor-induced angiogenesis. The polypeptide is Protein jagged-1 (Jag1) (Rattus norvegicus (Rat)).